A 253-amino-acid chain; its full sequence is Bridging integrator 3 (253 aa).

The region spanning 9–232 is the BAR domain; the sequence is GQPKKQIVPK…LDQPGHSDEQ (224 aa). Coiled coils occupy residues 18–51, 120–152, and 231–247; these read KTVE…STDA, SLNM…EKTG, and EQRE…LRAL. Positions 220 to 240 are disordered; it reads SHQLDQPGHSDEQRERENEAK. Positions 227 to 240 are enriched in basic and acidic residues; it reads GHSDEQRERENEAK.

As to expression, ubiquitously expressed except in brain.

The protein resides in the cytoplasm. Its subcellular location is the cytoskeleton. Functionally, involved in cytokinesis and septation where it has a role in the localization of F-actin. The sequence is that of Bridging integrator 3 (BIN3) from Homo sapiens (Human).